The chain runs to 336 residues: Glucokinase (336 aa).

12–17 (ADIGGT) is an ATP binding site.

Belongs to the bacterial glucokinase family.

The protein localises to the cytoplasm. The enzyme catalyses D-glucose + ATP = D-glucose 6-phosphate + ADP + H(+). In Helicobacter pylori (strain ATCC 700392 / 26695) (Campylobacter pylori), this protein is Glucokinase.